A 72-amino-acid chain; its full sequence is UPF0495 protein KLLA0D04334g (72 aa).

Residues 20 to 42 form a helical membrane-spanning segment; that stretch reads PVELTPLFLAMGVALASGTWFSY.

This sequence belongs to the UPF0495 family.

It localises to the membrane. The sequence is that of UPF0495 protein KLLA0D04334g from Kluyveromyces lactis (strain ATCC 8585 / CBS 2359 / DSM 70799 / NBRC 1267 / NRRL Y-1140 / WM37) (Yeast).